The primary structure comprises 1402 residues: DNA-directed RNA polymerase subunit beta' (1402 aa).

Zn(2+) contacts are provided by Cys-71, Cys-73, Cys-86, and Cys-89. Mg(2+)-binding residues include Asp-462, Asp-464, and Asp-466. Residues Cys-808, Cys-881, Cys-888, and Cys-891 each coordinate Zn(2+).

The protein belongs to the RNA polymerase beta' chain family. As to quaternary structure, the RNAP catalytic core consists of 2 alpha, 1 beta, 1 beta' and 1 omega subunit. When a sigma factor is associated with the core the holoenzyme is formed, which can initiate transcription. Mg(2+) is required as a cofactor. Zn(2+) serves as cofactor.

It carries out the reaction RNA(n) + a ribonucleoside 5'-triphosphate = RNA(n+1) + diphosphate. Functionally, DNA-dependent RNA polymerase catalyzes the transcription of DNA into RNA using the four ribonucleoside triphosphates as substrates. In Hyphomonas neptunium (strain ATCC 15444), this protein is DNA-directed RNA polymerase subunit beta'.